The primary structure comprises 457 residues: Adenylosuccinate synthetase isozyme 1 (457 aa).

A disordered region spans residues 1–21 (MSGTRASNDRPPGAGGVKRGR). Residues 42-48 (GDEGKGK) and 70-72 (GHT) contribute to the GTP site. The Proton acceptor role is filled by D43. D43 and G70 together coordinate Mg(2+). D43 is a substrate binding site. IMP-binding positions include 43-46 (DEGK), 68-71 (NAGH), T163, R177, N256, T271, and R335. H71 acts as the Proton donor in catalysis. A substrate-binding site is contributed by 331 to 337 (VTTGRKR). Residues R337, 363–365 (KLD), and 445–448 (GVGK) each bind GTP.

It belongs to the adenylosuccinate synthetase family. Homodimer. Requires Mg(2+) as cofactor. As to expression, predominantly expressed in skeletal muscle and heart, as well as in several hematopoietic cell lines and solid tumors.

Its subcellular location is the cytoplasm. The catalysed reaction is IMP + L-aspartate + GTP = N(6)-(1,2-dicarboxyethyl)-AMP + GDP + phosphate + 2 H(+). It functions in the pathway purine metabolism; AMP biosynthesis via de novo pathway; AMP from IMP: step 1/2. Component of the purine nucleotide cycle (PNC), which interconverts IMP and AMP to regulate the nucleotide levels in various tissues, and which contributes to glycolysis and ammoniagenesis. Catalyzes the first committed step in the biosynthesis of AMP from IMP. This chain is Adenylosuccinate synthetase isozyme 1, found in Homo sapiens (Human).